A 32-amino-acid chain; its full sequence is Alpha-2-macroglobulin homolog (32 aa).

Positions 16-19 form a cross-link, isoglutamyl cysteine thioester (Cys-Gln); the sequence is CGEQ.

Belongs to the protease inhibitor I39 (alpha-2-macroglobulin) family. In terms of assembly, homodimer; disulfide-linked.

The protein resides in the secreted. Functionally, is able to inhibit all four classes of proteinases by a unique 'trapping' mechanism. This protein has a peptide stretch, called the 'bait region' which contains specific cleavage sites for different proteinases. When a proteinase cleaves the bait region, a conformational change is induced in the protein which traps the proteinase. The entrapped enzyme remains active against low molecular weight substrates (activity against high molecular weight substrates is greatly reduced). Following cleavage in the bait region a thioester bond is hydrolyzed and mediates the covalent binding of the protein to the proteinase. The chain is Alpha-2-macroglobulin homolog from Pacifastacus leniusculus (Signal crayfish).